We begin with the raw amino-acid sequence, 363 residues long: Mannose-1-phosphate guanyltransferase (363 aa).

This sequence belongs to the transferase hexapeptide repeat family.

The protein resides in the cytoplasm. It carries out the reaction alpha-D-mannose 1-phosphate + GTP + H(+) = GDP-alpha-D-mannose + diphosphate. It participates in nucleotide-sugar biosynthesis; GDP-alpha-D-mannose biosynthesis; GDP-alpha-D-mannose from alpha-D-mannose 1-phosphate (GTP route): step 1/1. In terms of biological role, involved in cell wall synthesis where it is required for glycosylation. Involved in cell cycle progression through cell-size checkpoint. Required for the correct assembly of the septum. This is Mannose-1-phosphate guanyltransferase (mpg1) from Schizosaccharomyces pombe (strain 972 / ATCC 24843) (Fission yeast).